The primary structure comprises 2185 residues: Genome polyprotein (2185 aa).

Gly-2 carries the N-myristoyl glycine; by host lipid modification. At 2 to 1495 (GAQVSTQKTG…HVNRAFICLQ (1494 aa)) the chain is on the cytoplasmic side. Residues 566-582 (FFQGPPGEVVERAIARV) are amphipathic alpha-helix. Active-site for protease 2A activity residues include His-872 and Asp-890. Residues Cys-907 and Cys-909 each contribute to the Zn(2+) site. Cys-961 serves as the catalytic For protease 2A activity. The Zn(2+) site is built by Cys-967 and His-969. Residues 1101-1173 (NSGWLKKFTE…EQSAPSQSDQ (73 aa)) are membrane-binding. Residues 1101 to 1239 (NSGWLKKFTE…SPGAGKSVAT (139 aa)) are oligomerization. Residues 1122 to 1126 (AIKIQ) are RNA-binding. In terms of domain architecture, SF3 helicase spans 1205–1361 (EKKMSNYIQF…SMYSQNGKIN (157 aa)). Residues Cys-1369, Cys-1381, and Cys-1386 each contribute to the Zn(2+) site. Residues 1369-1386 (CDEECCPVNFKKCCPLVC) form a C4-type; degenerate zinc finger. The tract at residues 1413-1420 (EYNHRHSV) is RNA-binding. The oligomerization stretch occupies residues 1424 to 1429 (LEALFQ). The stretch at 1496–1511 (ALTTFVSVAGIIYIIY) is an intramembrane region. Over 1512 to 2185 (KLFAGFQGAY…TLRRKWLDSF (674 aa)) the chain is Cytoplasmic. Residue Tyr-1521 is modified to O-(5'-phospho-RNA)-tyrosine. Residues 1541 to 1719 (GPAFEFAVAM…FSAALLRHYF (179 aa)) form the Peptidase C3 domain. Active-site for protease 3C activity residues include His-1580, Glu-1611, and Cys-1687. Residues 1950–2066 (GHLIAFDYSG…SYPWPIDASL (117 aa)) enclose the RdRp catalytic domain. Mg(2+)-binding residues include Asp-1956 and Asp-2052.

It belongs to the picornaviruses polyprotein family. Interacts with capsid protein VP1 and capsid protein VP3 to form heterotrimeric protomers. As to quaternary structure, interacts with capsid protein VP0, and capsid protein VP3 to form heterotrimeric protomers. Five protomers subsequently associate to form pentamers which serve as building blocks for the capsid. Interacts with capsid protein VP2, capsid protein VP3 and capsid protein VP4 following cleavage of capsid protein VP0. In terms of assembly, interacts with capsid protein VP1 and capsid protein VP3 in the mature capsid. Interacts with capsid protein VP0 and capsid protein VP1 to form heterotrimeric protomers. Five protomers subsequently associate to form pentamers which serve as building blocks for the capsid. Interacts with capsid protein VP4 in the mature capsid. Interacts with protein 2C; this interaction may be important for virion morphogenesis. As to quaternary structure, interacts with capsid protein VP1 and capsid protein VP3. In terms of assembly, homodimer. Homohexamer; forms a hexameric ring structure with 6-fold symmetry characteristic of AAA+ ATPases. Interacts (via N-terminus) with host RTN3 (via reticulon domain); this interaction is important for viral replication. Interacts with capsid protein VP3; this interaction may be important for virion morphogenesis. As to quaternary structure, interacts with protein 3CD. In terms of assembly, homodimer. Interacts with host GBF1. Interacts (via GOLD domain) with host ACBD3 (via GOLD domain); this interaction allows the formation of a viral protein 3A/ACBD3 heterotetramer with a 2:2 stoichiometry, which will stimulate the recruitment of host PI4KB in order to synthesize PI4P at the viral RNA replication sites. Interacts with RNA-directed RNA polymerase. As to quaternary structure, interacts with protein 3AB and with RNA-directed RNA polymerase. In terms of assembly, interacts with Viral protein genome-linked and with protein 3CD. Requires Mg(2+) as cofactor. In terms of processing, specific enzymatic cleavages in vivo by the viral proteases yield processing intermediates and the mature proteins. Post-translationally, myristoylation is required for the formation of pentamers during virus assembly. Further assembly of 12 pentamers and a molecule of genomic RNA generates the provirion. During virion maturation, immature virions are rendered infectious following cleavage of VP0 into VP4 and VP2. This maturation seems to be an autocatalytic event triggered by the presence of RNA in the capsid and it is followed by a conformational change infectious virion. In terms of processing, myristoylation is required during RNA encapsidation and formation of the mature virus particle. Post-translationally, VPg is uridylylated by the polymerase into VPg-pUpU. This acts as a nucleotide-peptide primer for the genomic RNA replication.

The protein resides in the virion. It is found in the host cytoplasm. It localises to the host cytoplasmic vesicle membrane. Its subcellular location is the host nucleus. The catalysed reaction is a ribonucleoside 5'-triphosphate + H2O = a ribonucleoside 5'-diphosphate + phosphate + H(+). The enzyme catalyses Selective cleavage of Tyr-|-Gly bond in the picornavirus polyprotein.. It catalyses the reaction RNA(n) + a ribonucleoside 5'-triphosphate = RNA(n+1) + diphosphate. It carries out the reaction Selective cleavage of Gln-|-Gly bond in the poliovirus polyprotein. In other picornavirus reactions Glu may be substituted for Gln, and Ser or Thr for Gly.. With respect to regulation, replication or transcription is subject to high level of random mutations by the nucleotide analog ribavirin. Functionally, forms an icosahedral capsid of pseudo T=3 symmetry with capsid proteins VP2 and VP3. The capsid is 300 Angstroms in diameter, composed of 60 copies of each capsid protein and enclosing the viral positive strand RNA genome. Capsid protein VP1 mainly forms the vertices of the capsid. Capsid protein VP1 interacts with host cell receptor to provide virion attachment to target host cells. This attachment induces virion internalization. Tyrosine kinases are probably involved in the entry process. After binding to its receptor, the capsid undergoes conformational changes. Capsid protein VP1 N-terminus (that contains an amphipathic alpha-helix) and capsid protein VP4 are externalized. Together, they shape a pore in the host membrane through which viral genome is translocated to host cell cytoplasm. In terms of biological role, forms an icosahedral capsid of pseudo T=3 symmetry with capsid proteins VP2 and VP3. The capsid is 300 Angstroms in diameter, composed of 60 copies of each capsid protein and enclosing the viral positive strand RNA genome. Lies on the inner surface of the capsid shell. After binding to the host receptor, the capsid undergoes conformational changes. Capsid protein VP4 is released, Capsid protein VP1 N-terminus is externalized, and together, they shape a pore in the host membrane through which the viral genome is translocated into the host cell cytoplasm. Its function is as follows. Component of immature procapsids, which is cleaved into capsid proteins VP4 and VP2 after maturation. Allows the capsid to remain inactive before the maturation step. Functionally, cysteine protease that cleaves viral polyprotein and specific host proteins. It is responsible for the autocatalytic cleavage between the P1 and P2 regions, which is the first cleavage occurring in the polyprotein. Also cleaves the host translation initiation factor EIF4G1, in order to shut down the capped cellular mRNA translation. Inhibits the host nucleus-cytoplasm protein and RNA trafficking by cleaving host members of the nuclear pores. Counteracts stress granule formation probably by antagonizing its assembly or promoting its dissassembly. In terms of biological role, plays an essential role in the virus replication cycle by acting as a viroporin. Creates a pore in the host endoplasmic reticulum and as a consequence releases Ca2+ in the cytoplasm of infected cell. In turn, high levels of cytoplasmic calcium may trigger membrane trafficking and transport of viral ER-associated proteins to viroplasms, sites of viral genome replication. Induces and associates with structural rearrangements of intracellular membranes. Displays RNA-binding, nucleotide binding and NTPase activities. May play a role in virion morphogenesis and viral RNA encapsidation by interacting with the capsid protein VP3. Its function is as follows. Localizes the viral replication complex to the surface of membranous vesicles. Together with protein 3CD binds the Cis-Active RNA Element (CRE) which is involved in RNA synthesis initiation. Acts as a cofactor to stimulate the activity of 3D polymerase, maybe through a nucleid acid chaperone activity. Functionally, localizes the viral replication complex to the surface of membranous vesicles. It inhibits host cell endoplasmic reticulum-to-Golgi apparatus transport and causes the disassembly of the Golgi complex, possibly through GBF1 interaction. This would result in depletion of MHC, trail receptors and IFN receptors at the host cell surface. Plays an essential role in viral RNA replication by recruiting ACBD3 and PI4KB at the viral replication sites, thereby allowing the formation of the rearranged membranous structures where viral replication takes place. In terms of biological role, acts as a primer for viral RNA replication and remains covalently bound to viral genomic RNA. VPg is uridylylated prior to priming replication into VPg-pUpU. The oriI viral genomic sequence may act as a template for this. The VPg-pUpU is then used as primer on the genomic RNA poly(A) by the RNA-dependent RNA polymerase to replicate the viral genome. During genome replication, the VPg-RNA linkage is removed by the host TDP2, thereby accelerating replication. During the late stage of the replication cycle, host TDP2 is excluded from sites of viral RNA synthesis and encapsidation, allowing for the generation of progeny virions. Involved in the viral replication complex and viral polypeptide maturation. It exhibits protease activity with a specificity and catalytic efficiency that is different from protease 3C. Protein 3CD lacks polymerase activity. Protein 3CD binds to the 5'UTR of the viral genome. Its function is as follows. Major viral protease that mediates proteolytic processing of the polyprotein. Cleaves host EIF5B, contributing to host translation shutoff. Also cleaves host PABPC1, contributing to host translation shutoff. Cleaves host NLRP1, triggers host N-glycine-mediated degradation of the autoinhibitory NLRP1 N-terminal fragment. Functionally, replicates the viral genomic RNA on the surface of intracellular membranes. May form linear arrays of subunits that propagate along a strong head-to-tail interaction called interface-I. Covalently attaches UMP to a tyrosine of VPg, which is used to prime RNA synthesis. The positive stranded RNA genome is first replicated at virus induced membranous vesicles, creating a dsRNA genomic replication form. This dsRNA is then used as template to synthesize positive stranded RNA genomes. ss(+)RNA genomes are either translated, replicated or encapsidated. This chain is Genome polyprotein, found in Swine vesicular disease virus (strain H/3 '76) (SVDV).